The chain runs to 451 residues: Chromosomal replication initiator protein DnaA (451 aa).

The tract at residues 1–72 (MQSIEDIWQE…ANILQEITGR (72 aa)) is domain I, interacts with DnaA modulators. The segment at 72-108 (RLFDVRFIDGEQEENFEYTVIKPNPALDEDGIEIGKH) is domain II. A domain III, AAA+ region region spans residues 109–325 (MLNPRYVFDT…GALIRVVAYS (217 aa)). 4 residues coordinate ATP: Gly153, Gly155, Lys156, and Thr157. Residues 326–451 (SLVNKDITAG…KNLRKSQNMF (126 aa)) are domain IV, binds dsDNA.

Belongs to the DnaA family. As to quaternary structure, oligomerizes as a right-handed, spiral filament on DNA at oriC.

Its subcellular location is the cytoplasm. Plays an essential role in the initiation and regulation of chromosomal replication. ATP-DnaA binds to the origin of replication (oriC) to initiate formation of the DNA replication initiation complex once per cell cycle. Binds the DnaA box (a 9 base pair repeat at the origin) and separates the double-stranded (ds)DNA. Forms a right-handed helical filament on oriC DNA; dsDNA binds to the exterior of the filament while single-stranded (ss)DNA is stabiized in the filament's interior. The ATP-DnaA-oriC complex binds and stabilizes one strand of the AT-rich DNA unwinding element (DUE), permitting loading of DNA polymerase. After initiation quickly degrades to an ADP-DnaA complex that is not apt for DNA replication. Binds acidic phospholipids. This Listeria welshimeri serovar 6b (strain ATCC 35897 / DSM 20650 / CCUG 15529 / CIP 8149 / NCTC 11857 / SLCC 5334 / V8) protein is Chromosomal replication initiator protein DnaA.